Reading from the N-terminus, the 218-residue chain is Thiamine-phosphate synthase (218 aa).

4-amino-2-methyl-5-(diphosphooxymethyl)pyrimidine contacts are provided by residues Q43–K47 and N75. Positions 76 and 95 each coordinate Mg(2+). S114 provides a ligand contact to 4-amino-2-methyl-5-(diphosphooxymethyl)pyrimidine. T141–T143 contributes to the 2-[(2R,5Z)-2-carboxy-4-methylthiazol-5(2H)-ylidene]ethyl phosphate binding site. Position 144 (K144) interacts with 4-amino-2-methyl-5-(diphosphooxymethyl)pyrimidine. G172 lines the 2-[(2R,5Z)-2-carboxy-4-methylthiazol-5(2H)-ylidene]ethyl phosphate pocket.

Belongs to the thiamine-phosphate synthase family. Mg(2+) is required as a cofactor.

The catalysed reaction is 2-[(2R,5Z)-2-carboxy-4-methylthiazol-5(2H)-ylidene]ethyl phosphate + 4-amino-2-methyl-5-(diphosphooxymethyl)pyrimidine + 2 H(+) = thiamine phosphate + CO2 + diphosphate. It carries out the reaction 2-(2-carboxy-4-methylthiazol-5-yl)ethyl phosphate + 4-amino-2-methyl-5-(diphosphooxymethyl)pyrimidine + 2 H(+) = thiamine phosphate + CO2 + diphosphate. The enzyme catalyses 4-methyl-5-(2-phosphooxyethyl)-thiazole + 4-amino-2-methyl-5-(diphosphooxymethyl)pyrimidine + H(+) = thiamine phosphate + diphosphate. The protein operates within cofactor biosynthesis; thiamine diphosphate biosynthesis; thiamine phosphate from 4-amino-2-methyl-5-diphosphomethylpyrimidine and 4-methyl-5-(2-phosphoethyl)-thiazole: step 1/1. Its function is as follows. Condenses 4-methyl-5-(beta-hydroxyethyl)thiazole monophosphate (THZ-P) and 2-methyl-4-amino-5-hydroxymethyl pyrimidine pyrophosphate (HMP-PP) to form thiamine monophosphate (TMP). This Thermobifida fusca (strain YX) protein is Thiamine-phosphate synthase.